The following is a 190-amino-acid chain: UPF0301 protein RSc0675 (190 aa).

This sequence belongs to the UPF0301 (AlgH) family.

The sequence is that of UPF0301 protein RSc0675 from Ralstonia nicotianae (strain ATCC BAA-1114 / GMI1000) (Ralstonia solanacearum).